The following is an 868-amino-acid chain: MSFFFIRKIFGSTNKKIIKSFRKIVQQINALETEMQSLSDEELAGKTEEFKQELKNGKTLNDLLVPAFAVVREASRRFLNMRHFDVQLIGGMVLHNGMISEMKTGEGKTLVATLAAYLNSLEGKGVHVVTVNDYLAKRDTEWMSKLYNSLGVSVAFITNNLTDEERKEAYSADIVYSTNNELAFDYLRDNMKFSQEDMVQRGFHYGIVDEVDSILIDEARTPLIISGPVEENNQIYKHINKIVTKLVDSDYEVDEKGRTVFLTEDGISRVEELLRSYNLIPENSSLYDTDSMIMTHYIDQALRAYKLFTADKDYIVKDGKVVIIDEFTGRMMEGRRYSDGLHQALEAKENLEIQHENQTLASVTFQNYFRMYNKLSGMTGTAATEAEEFRDIYRLNVVKIPTNVPVKRVDIDDEIYGTEKEKFNAVLKFIEECYKRLQPVLVGTVSIENSEKLSALLQSHSLKHSVLNARYHEQEAYIIAQAGVPGSITIATNMAGRGTDIQLGGNAEMIAKVELKKIKNADEREKKYQEIVERVKKDKEIAIKAGGLCVVGTERHESRRIDDQLRGRSGRQGDPGLSKFFLSLEDDLMRIFGSDRMRSFLQKVGLKNNEAIHHPWINKALEKAQKKVEARNYDVRKSLLKFDDVINNQRKVIFKQRNNILGNEINDLLEVYSEVNESVVEGIIQSGYYEDYIENIVKEFHTRYGITLDKEDLAKFLNKQEALNYINDKIQEFFTEKEKYFNSQHTTDLWNTIVKQMMIMTLDHLWREHLSVLESLRQSISLRAMGQKDPLNEFKREAFLMFESMLEKWKELTIHRLAHFKLADNQEIGNRLHSARNSRLPKVSRNDKCPCNSGKKYKHCHGAVTVVS.

ATP contacts are provided by residues Gln87, 105–109, and Asp500; that span reads GEGKT. Cys849, Cys851, Cys860, and His861 together coordinate Zn(2+).

This sequence belongs to the SecA family. In terms of assembly, monomer and homodimer. Part of the essential Sec protein translocation apparatus which comprises SecA, SecYEG and auxiliary proteins SecDF-YajC and YidC. Zn(2+) serves as cofactor.

The protein resides in the cell membrane. It localises to the cytoplasm. It catalyses the reaction ATP + H2O + cellular proteinSide 1 = ADP + phosphate + cellular proteinSide 2.. Part of the Sec protein translocase complex. Interacts with the SecYEG preprotein conducting channel. Has a central role in coupling the hydrolysis of ATP to the transfer of proteins into and across the cell membrane, serving both as a receptor for the preprotein-SecB complex and as an ATP-driven molecular motor driving the stepwise translocation of polypeptide chains across the membrane. The chain is Protein translocase subunit SecA from Wolbachia pipientis wMel.